Here is a 309-residue protein sequence, read N- to C-terminus: L-aminoadipate-semialdehyde dehydrogenase-phosphopantetheinyl transferase (309 aa).

CoA contacts are provided by residues Arg47, 86 to 91 (RTSKGK), and 108 to 111 (NISH). Mg(2+)-binding residues include Asp129 and Glu181. 181 to 185 (ESFIK) contacts CoA.

Belongs to the P-Pant transferase superfamily. AcpS family. As to quaternary structure, monomer. Mg(2+) serves as cofactor.

It localises to the cytoplasm. The protein resides in the cytosol. The enzyme catalyses apo-[ACP] + CoA = holo-[ACP] + adenosine 3',5'-bisphosphate + H(+). It carries out the reaction apo-[ACP] + acetyl-CoA = acetyl-[ACP] + adenosine 3',5'-bisphosphate + H(+). Catalyzes the post-translational modification of target proteins by phosphopantetheine. Can transfer the 4'-phosphopantetheine moiety from coenzyme A, regardless of whether the CoA is presented in the free thiol form or as an acetyl thioester, to a serine residue of a broad range of acceptors including the acyl carrier domain of FASN. The sequence is that of L-aminoadipate-semialdehyde dehydrogenase-phosphopantetheinyl transferase (Aasdhppt) from Mus musculus (Mouse).